We begin with the raw amino-acid sequence, 257 residues long: MVLIRVIANLLILQVSYAQKSSELVVGGDECDINEHPFLAFLYSHGYFCGLTLINQEWVLTAAHCDRRFMRIYLGIHARSVANDDEVIRYPKEKFICPNKNMSDEKDKDIMLIRLNRPVKNSTHIAPISLPSNPPSVGSVCRVMGWGSITIPNDTYPDVPHCANINLVNDTVCRGAYKRFPAKSRTLCAGVLQGGKDTCVGDSGGPLICNGTFQGIVSWGGKVCARPRKPALYTKVFDYLPWIQSIIAGNKTATCPP.

The signal sequence occupies residues 1–18 (MVLIRVIANLLILQVSYA). Positions 19–24 (QKSSEL) are excised as a propeptide. The Peptidase S1 domain occupies 25–248 (VVGGDECDIN…YLPWIQSIIA (224 aa)). 6 cysteine pairs are disulfide-bonded: C31–C162, C49–C65, C97–C255, C141–C209, C173–C188, and C199–C224. H64 (charge relay system) is an active-site residue. N-linked (GlcNAc...) asparagine glycosylation occurs at N101. D109 (charge relay system) is an active-site residue. N-linked (GlcNAc...) asparagine glycans are attached at residues N121, N153, and N169. S203 functions as the Charge relay system in the catalytic mechanism. N210 and N250 each carry an N-linked (GlcNAc...) asparagine glycan.

The protein belongs to the peptidase S1 family. Snake venom subfamily. As to quaternary structure, monomer. As to expression, expressed by the venom gland.

The protein resides in the secreted. Snake venom serine protease that may act in the hemostasis system of the prey. The polypeptide is Snake venom serine protease BITS01A (Bothrops insularis (Golden lancehead)).